Reading from the N-terminus, the 428-residue chain is uncharacterized protein (428 aa).

The Glutaredoxin domain maps to K241–E351. A compositionally biased stretch (acidic residues) spans E386–V401. The segment at E386–R405 is disordered.

This is an uncharacterized protein from Arabidopsis thaliana (Mouse-ear cress).